Reading from the N-terminus, the 147-residue chain is Acidic phospholipase A2 beta-bungarotoxin A3 chain (147 aa).

Positions 1–19 (MYPAHLLVLSAVCVSLLGA) are cleaved as a signal peptide. Positions 20–27 (ANIPPHPL) are excised as a propeptide. 6 disulfides stabilise this stretch: cysteine 54/cysteine 146, cysteine 56/cysteine 72, cysteine 71/cysteine 127, cysteine 78/cysteine 120, cysteine 88/cysteine 113, and cysteine 106/cysteine 118. Positions 55, 57, and 59 each coordinate Ca(2+). The active site involves histidine 75. Aspartate 76 contacts Ca(2+). Residue aspartate 121 is part of the active site.

This sequence belongs to the phospholipase A2 family. Group I subfamily. D49 sub-subfamily. Heterodimer; disulfide-linked. The A chains have phospholipase A2 activity and the B chains show homology with the basic protease inhibitors. The A3 chain is found in beta-5 bungarotoxins. Requires Ca(2+) as cofactor. Expressed by the venom gland.

It localises to the secreted. The catalysed reaction is a 1,2-diacyl-sn-glycero-3-phosphocholine + H2O = a 1-acyl-sn-glycero-3-phosphocholine + a fatty acid + H(+). In terms of biological role, snake venom phospholipase A2 (PLA2) that inhibits neuromuscular transmission by blocking acetylcholine release from the nerve termini. PLA2 catalyzes the calcium-dependent hydrolysis of the 2-acyl groups in 3-sn-phosphoglycerides. The protein is Acidic phospholipase A2 beta-bungarotoxin A3 chain of Bungarus multicinctus (Many-banded krait).